The sequence spans 101 residues: Large ribosomal subunit protein bL28 (101 aa).

This sequence belongs to the bacterial ribosomal protein bL28 family.

This Caulobacter sp. (strain K31) protein is Large ribosomal subunit protein bL28.